Consider the following 238-residue polypeptide: 3-dehydroquinate dehydratase (238 aa).

3-dehydroquinate-binding positions include 35–37 (ELR) and R70. H133 acts as the Proton donor/acceptor in catalysis. Catalysis depends on K160, which acts as the Schiff-base intermediate with substrate. 3-dehydroquinate contacts are provided by R202 and Q225.

This sequence belongs to the type-I 3-dehydroquinase family. Homodimer.

The enzyme catalyses 3-dehydroquinate = 3-dehydroshikimate + H2O. It functions in the pathway metabolic intermediate biosynthesis; chorismate biosynthesis; chorismate from D-erythrose 4-phosphate and phosphoenolpyruvate: step 3/7. Functionally, involved in the third step of the chorismate pathway, which leads to the biosynthesis of aromatic amino acids. Catalyzes the cis-dehydration of 3-dehydroquinate (DHQ) and introduces the first double bond of the aromatic ring to yield 3-dehydroshikimate. The protein is 3-dehydroquinate dehydratase of Staphylococcus aureus (strain MRSA252).